The primary structure comprises 330 residues: CRISPR-associated endonuclease Cas1 (330 aa).

Mn(2+)-binding residues include E154, H222, and E237.

It belongs to the CRISPR-associated endonuclease Cas1 family. In terms of assembly, homodimer, forms a heterotetramer with a Cas2 homodimer. Mg(2+) is required as a cofactor. Requires Mn(2+) as cofactor.

Its function is as follows. CRISPR (clustered regularly interspaced short palindromic repeat), is an adaptive immune system that provides protection against mobile genetic elements (viruses, transposable elements and conjugative plasmids). CRISPR clusters contain spacers, sequences complementary to antecedent mobile elements, and target invading nucleic acids. CRISPR clusters are transcribed and processed into CRISPR RNA (crRNA). Acts as a dsDNA endonuclease. Involved in the integration of spacer DNA into the CRISPR cassette. The protein is CRISPR-associated endonuclease Cas1 of Clostridium perfringens (strain SM101 / Type A).